The chain runs to 375 residues: Lipid-A-disaccharide synthase (375 aa).

This sequence belongs to the LpxB family.

It carries out the reaction a lipid X + a UDP-2-N,3-O-bis[(3R)-3-hydroxyacyl]-alpha-D-glucosamine = a lipid A disaccharide + UDP + H(+). It participates in bacterial outer membrane biogenesis; LPS lipid A biosynthesis. Condensation of UDP-2,3-diacylglucosamine and 2,3-diacylglucosamine-1-phosphate to form lipid A disaccharide, a precursor of lipid A, a phosphorylated glycolipid that anchors the lipopolysaccharide to the outer membrane of the cell. The sequence is that of Lipid-A-disaccharide synthase from Pseudomonas putida (strain GB-1).